Consider the following 835-residue polypeptide: Replication origin-binding protein (835 aa).

One can recognise a Helicase ATP-binding domain in the interval 54–215; the sequence is PGMSQTRPVT…SGLRGDENIH (162 aa). An ATP-binding site is contributed by 67 to 74; it reads APMGSGKT.

The protein belongs to the herpesviridae OriBP family. In terms of assembly, homodimer. Interacts with the major DNA-binding protein. Interacts with the helicase/primase component 52 and the polymerase accessory protein.

Its subcellular location is the host nucleus. Functions as a docking protein to recruit essential components of the viral replication machinery to viral DNA origins. In the presence of the major DNA-binding protein, opens dsDNA leading to a conformational change in the origin that facilitates DNA unwinding and subsequent replication. The polypeptide is Replication origin-binding protein (Homo sapiens (Human)).